We begin with the raw amino-acid sequence, 217 residues long: Large ribosomal subunit protein uL1 (217 aa).

It belongs to the universal ribosomal protein uL1 family. As to quaternary structure, part of the 50S ribosomal subunit.

Binds directly to 23S rRNA. Probably involved in E site tRNA release. In terms of biological role, protein L1 is also a translational repressor protein, it controls the translation of its operon by binding to its mRNA. The chain is Large ribosomal subunit protein uL1 from Thermoplasma volcanium (strain ATCC 51530 / DSM 4299 / JCM 9571 / NBRC 15438 / GSS1).